We begin with the raw amino-acid sequence, 236 residues long: Alpha-acetolactate decarboxylase (236 aa).

It belongs to the alpha-acetolactate decarboxylase family.

The catalysed reaction is (2S)-2-acetolactate + H(+) = (R)-acetoin + CO2. The protein operates within polyol metabolism; (R,R)-butane-2,3-diol biosynthesis; (R,R)-butane-2,3-diol from pyruvate: step 2/3. Converts acetolactate into acetoin. This Lactococcus lactis subsp. cremoris (strain MG1363) protein is Alpha-acetolactate decarboxylase (aldB).